The primary structure comprises 33 residues: Brevinin-2Ef (33 aa).

An intrachain disulfide couples cysteine 27 to cysteine 33.

As to expression, expressed by the skin glands.

Its subcellular location is the secreted. Shows antibacterial activity against representative Gram-negative and Gram-positive bacterial species, and hemolytic activity. The chain is Brevinin-2Ef from Pelophylax ridibundus (Marsh frog).